A 513-amino-acid polypeptide reads, in one-letter code: ATP synthase subunit alpha (513 aa).

Position 170 to 177 (170 to 177 (GDRQTGKT)) interacts with ATP.

The protein belongs to the ATPase alpha/beta chains family. In terms of assembly, F-type ATPases have 2 components, CF(1) - the catalytic core - and CF(0) - the membrane proton channel. CF(1) has five subunits: alpha(3), beta(3), gamma(1), delta(1), epsilon(1). CF(0) has four main subunits: a(1), b(1), b'(1) and c(9-12).

The protein resides in the cell inner membrane. The enzyme catalyses ATP + H2O + 4 H(+)(in) = ADP + phosphate + 5 H(+)(out). Functionally, produces ATP from ADP in the presence of a proton gradient across the membrane. The alpha chain is a regulatory subunit. The protein is ATP synthase subunit alpha of Gloeobacter violaceus (strain ATCC 29082 / PCC 7421).